We begin with the raw amino-acid sequence, 213 residues long: Outer-membrane lipoprotein carrier protein (213 aa).

A signal peptide spans Met-1–Ala-23.

This sequence belongs to the LolA family. Monomer.

It localises to the periplasm. Participates in the translocation of lipoproteins from the inner membrane to the outer membrane. Only forms a complex with a lipoprotein if the residue after the N-terminal Cys is not an aspartate (The Asp acts as a targeting signal to indicate that the lipoprotein should stay in the inner membrane). This chain is Outer-membrane lipoprotein carrier protein, found in Actinobacillus pleuropneumoniae serotype 3 (strain JL03).